Here is a 366-residue protein sequence, read N- to C-terminus: Ribosomal RNA large subunit methyltransferase M (366 aa).

Residues S188, C221–G224, D240, D260, and D277 each bind S-adenosyl-L-methionine. Residue K306 is the Proton acceptor of the active site.

Belongs to the class I-like SAM-binding methyltransferase superfamily. RNA methyltransferase RlmE family. RlmM subfamily. As to quaternary structure, monomer.

The protein localises to the cytoplasm. It catalyses the reaction cytidine(2498) in 23S rRNA + S-adenosyl-L-methionine = 2'-O-methylcytidine(2498) in 23S rRNA + S-adenosyl-L-homocysteine + H(+). Functionally, catalyzes the 2'-O-methylation at nucleotide C2498 in 23S rRNA. The protein is Ribosomal RNA large subunit methyltransferase M of Salmonella arizonae (strain ATCC BAA-731 / CDC346-86 / RSK2980).